A 241-amino-acid chain; its full sequence is Uridylate kinase (241 aa).

Residue 15–18 (KISG) participates in ATP binding. Residues 23-28 (GDQGFG) are involved in allosteric activation by GTP. Residue Gly-57 participates in UMP binding. 2 residues coordinate ATP: Gly-58 and Arg-62. UMP contacts are provided by residues Asp-77 and 138–145 (TGNPYFTT). The ATP site is built by Thr-165, Tyr-171, and Asp-174.

This sequence belongs to the UMP kinase family. Homohexamer.

Its subcellular location is the cytoplasm. The enzyme catalyses UMP + ATP = UDP + ADP. It functions in the pathway pyrimidine metabolism; CTP biosynthesis via de novo pathway; UDP from UMP (UMPK route): step 1/1. Allosterically activated by GTP. Inhibited by UTP. Functionally, catalyzes the reversible phosphorylation of UMP to UDP. The sequence is that of Uridylate kinase from Paracoccus zeaxanthinifaciens.